The chain runs to 105 residues: Structural protein 11 (105 aa).

Residues 59–97 (NLIKSIQRARDVSEGEARELKDDMVTELEKAETKEERRD) are a coiled coil.

The protein resides in the virion. The protein is Structural protein 11 of His1 virus (isolate Australia/Victoria) (His1V).